We begin with the raw amino-acid sequence, 611 residues long: Leukotriene A-4 hydrolase (611 aa).

Position 73 is an N6-acetyllysine (K73). A peptide is bound by residues 135–137 and 267–272; these read QCQ and PYGGME. Residue H296 participates in Zn(2+) binding. The active-site Proton acceptor is the E297. Zn(2+) contacts are provided by H300 and E319. K337 is modified (N6-acetyllysine). The Proton donor role is filled by Y384. An N6-acetyllysine modification is found at K414. S416 carries the post-translational modification Phosphoserine. 564–566 provides a ligand contact to a peptide; sequence RMK. N6-acetyllysine is present on K573.

The protein belongs to the peptidase M1 family. As to quaternary structure, monomer. Requires Zn(2+) as cofactor. Phosphorylation at Ser-416 inhibits leukotriene-A4 hydrolase activity.

The protein resides in the cytoplasm. The catalysed reaction is leukotriene A4 + H2O = leukotriene B4. The enzyme catalyses (5S,6S)-epoxy-(18R)-hydroxy-(7E,9E,11Z,14Z,16E)-eicosapentaenoate + H2O = resolvin E1. It catalyses the reaction (5S,6S)-epoxy-(18S)-hydroxy-(7E,9E,11Z,14Z,16E)-eicosapentaenoate + H2O = 18S-resolvin E1. It carries out the reaction Release of the N-terminal residue from a tripeptide.. Its pathway is lipid metabolism; leukotriene B4 biosynthesis. With respect to regulation, inhibited by bestatin. Inhibited by captopril. The epoxide hydrolase activity is restrained by suicide inactivation that involves binding of LTA4 to Tyr-379. 4-(4-benzylphenyl)thiazol-2-amine (ARM1) selectively inhibits the epoxide hydrolase activity. Functionally, bifunctional zinc metalloenzyme that comprises both epoxide hydrolase (EH) and aminopeptidase activities. Acts as an epoxide hydrolase to catalyze the conversion of LTA4 to the pro-inflammatory mediator leukotriene B4 (LTB4). Also has aminopeptidase activity, with high affinity for N-terminal arginines of various synthetic tripeptides. In addition to its pro-inflammatory EH activity, may also counteract inflammation by its aminopeptidase activity, which inactivates by cleavage another neutrophil attractant, the tripeptide Pro-Gly-Pro (PGP), a bioactive fragment of collagen generated by the action of matrix metalloproteinase-9 (MMP9) and prolylendopeptidase (PREPL). Involved also in the biosynthesis of resolvin E1 and 18S-resolvin E1 from eicosapentaenoic acid, two lipid mediators that show potent anti-inflammatory and pro-resolving actions. This Rattus norvegicus (Rat) protein is Leukotriene A-4 hydrolase (Lta4h).